A 1863-amino-acid chain; its full sequence is C-myc promoter-binding protein (1863 aa).

Residues 42–200 (KEPITDVSVI…AVYLCYKKSV (159 aa)) form the MABP domain. Residues 192-364 (VYLCYKKSVA…KVPFPSPQRP (173 aa)) enclose the uDENN domain. A cDENN domain is found at 385–521 (PLPLSGGKFS…PCKNLMNTLN (137 aa)). Residues 523–641 (LHQQLAKLQQ…CSFVSDKDAS (119 aa)) form the dDENN domain. Residue Ser731 is modified to Phosphoserine. PPR repeat units follow at residues 772–808 (WFIC…MDPP) and 809–843 (DEVC…GIDP). A disordered region spans residues 905 to 952 (DLGYNSLSKDEVRRGDTSTEDIQEEKDKKGSDCSSLSESESTKGSADC). The segment covering 912–921 (SKDEVRRGDT) has biased composition (basic and acidic residues). The Bipartite nuclear localization signal motif lies at 917–933 (RRGDTSTEDIQEEKDKK). The span at 936-949 (DCSSLSESESTKGS) shows a compositional bias: low complexity. Residues Ser1015, Ser1035, Ser1099, Ser1151, and Ser1152 each carry the phosphoserine modification. The disordered stretch occupies residues 1075 to 1111 (TRPNTLDIGKPPLRSKRDSLEKESSDDDTPFDGSNYL). Residues 1177–1202 (TEQQQKEEEEEDEDDSKSISTPSARR) form a disordered region. Residues Ser1225, Ser1240, and Ser1251 each carry the phosphoserine modification. Disordered regions lie at residues 1237 to 1306 (NKKS…SPSF) and 1348 to 1375 (SKDQ…TDED). Positions 1269–1279 (TKSEEKPRDRL) are enriched in basic and acidic residues. A Phosphoserine modification is found at Ser1281. 2 stretches are compositionally biased toward polar residues: residues 1297-1306 (DTLTHSSPSF) and 1348-1371 (SKDQ…STSL). Phosphoserine occurs at positions 1508, 1587, 1589, and 1591.

In terms of tissue distribution, expressed ubiquitously. Highest expression in bone marrow, medium in peripheral blood lymphocytes and lowest in spleen. In brain, breast, and prostate, higher expression was seen in normal cells than in tumor cells. Expression is regulated in a growth- and cell cycle-dependent manner.

It localises to the nucleus. Probable guanine nucleotide exchange factor (GEF) which may activate RAB10. Promotes the exchange of GDP to GTP, converting inactive GDP-bound Rab proteins into their active GTP-bound form. According to PubMed:8056341, it may bind to ISRE-like element (interferon-stimulated response element) of MYC P2 promoter. The chain is C-myc promoter-binding protein (DENND4A) from Homo sapiens (Human).